Consider the following 863-residue polypeptide: Aminopeptidase N (863 aa).

Substrate-binding positions include Glu124 and 263–267 (GAMEN). His299 serves as a coordination point for Zn(2+). Glu300 acts as the Proton acceptor in catalysis. His303 and Glu322 together coordinate Zn(2+).

Belongs to the peptidase M1 family. The cofactor is Zn(2+).

It catalyses the reaction Release of an N-terminal amino acid, Xaa-|-Yaa- from a peptide, amide or arylamide. Xaa is preferably Ala, but may be most amino acids including Pro (slow action). When a terminal hydrophobic residue is followed by a prolyl residue, the two may be released as an intact Xaa-Pro dipeptide.. Functionally, aminopeptidase N is involved in the degradation of intracellular peptides generated by protein breakdown during normal growth as well as in response to nutrient starvation. The chain is Aminopeptidase N (pepN) from Caulobacter vibrioides (strain ATCC 19089 / CIP 103742 / CB 15) (Caulobacter crescentus).